We begin with the raw amino-acid sequence, 196 residues long: Somatotropin (196 aa).

The signal sequence occupies residues 1–16 (MDKVILVLLMSLGASS). A Pyrrolidone carboxylic acid modification is found at Gln17. His35 is a Zn(2+) binding site. Residues Cys67 and Cys169 are joined by a disulfide bond. Glu178 is a binding site for Zn(2+). Cys186 and Cys194 are oxidised to a cystine.

The protein belongs to the somatotropin/prolactin family.

It is found in the secreted. Growth hormone plays an important role in growth control and is involved in the regulation of several anabolic processes. Implicated as an osmoregulatory substance important for seawater adaptation. The protein is Somatotropin (gh) of Takifugu rubripes (Japanese pufferfish).